Consider the following 138-residue polypeptide: Putative nickel-responsive regulator (138 aa).

Positions 76, 87, 89, and 95 each coordinate Ni(2+).

It belongs to the transcriptional regulatory CopG/NikR family. It depends on Ni(2+) as a cofactor.

Transcriptional regulator. In Pseudomonas putida (strain ATCC 47054 / DSM 6125 / CFBP 8728 / NCIMB 11950 / KT2440), this protein is Putative nickel-responsive regulator.